We begin with the raw amino-acid sequence, 102 residues long: uncharacterized protein (102 aa).

Positions 1–41 (MLFLDSYSLLIQFQRFKNWESPRRFSSSFPLLLFVFKPIFA) are cleaved as a signal peptide.

This is an uncharacterized protein from Saccharomyces cerevisiae (strain ATCC 204508 / S288c) (Baker's yeast).